We begin with the raw amino-acid sequence, 152 residues long: Biotin carboxyl carrier protein of acetyl-CoA carboxylase (152 aa).

Positions 72 to 148 (IIDILSPISG…TKNQVLMKII (77 aa)) constitute a Biotinyl-binding domain. The residue at position 114 (lysine 114) is an N6-biotinyllysine.

Its subcellular location is the plastid. It is found in the chloroplast. The protein operates within lipid metabolism; fatty acid biosynthesis. Functionally, this protein is a component of the acetyl coenzyme A carboxylase complex; first, biotin carboxylase catalyzes the carboxylation of the carrier protein and then the transcarboxylase transfers the carboxyl group to form malonyl-CoA. The protein is Biotin carboxyl carrier protein of acetyl-CoA carboxylase (accB) of Cyanidium caldarium (Red alga).